The primary structure comprises 218 residues: Urease accessory protein UreG (218 aa).

22–29 (GPVGSGKT) is a binding site for GTP.

Belongs to the SIMIBI class G3E GTPase family. UreG subfamily. In terms of assembly, homodimer. UreD, UreF and UreG form a complex that acts as a GTP-hydrolysis-dependent molecular chaperone, activating the urease apoprotein by helping to assemble the nickel containing metallocenter of UreC. The UreE protein probably delivers the nickel.

It localises to the cytoplasm. Functionally, facilitates the functional incorporation of the urease nickel metallocenter. This process requires GTP hydrolysis, probably effectuated by UreG. This chain is Urease accessory protein UreG, found in Polaromonas naphthalenivorans (strain CJ2).